Here is a 527-residue protein sequence, read N- to C-terminus: F-box protein SKIP2 (527 aa).

One can recognise an F-box domain in the interval 39-85 (DRDFTGDLPDECLAHVFQFLGAGDRKRCSLVCKRWLLVDGQSRHRLS).

Part of a SCF (ASK-cullin-F-box) protein ligase complex. Interacts with SKP1A/ASK1, SKP1B/ASK2 and ASK11.

The protein localises to the nucleus. It functions in the pathway protein modification; protein ubiquitination. Functionally, component of SCF(ASK-cullin-F-box) E3 ubiquitin ligase complexes, which may mediate the ubiquitination and subsequent proteasomal degradation of target proteins. The polypeptide is F-box protein SKIP2 (SKIP2) (Arabidopsis thaliana (Mouse-ear cress)).